Consider the following 160-residue polypeptide: MTKKKAKVASNTIALNKRARHDYFIEDEIEAGLSLQGWEVKSMRAGKASIGDSYIIFKHGEAYLFGATIQPLSVASTHIVCDPTRTRKLLLNQKELASLFGKANRDGFTIVALSLYWKGPWAKVKIGLAKGKKLHDKREDIKDREWKVTKDRIMKNAQRG.

This sequence belongs to the SmpB family.

It is found in the cytoplasm. Functionally, required for rescue of stalled ribosomes mediated by trans-translation. Binds to transfer-messenger RNA (tmRNA), required for stable association of tmRNA with ribosomes. tmRNA and SmpB together mimic tRNA shape, replacing the anticodon stem-loop with SmpB. tmRNA is encoded by the ssrA gene; the 2 termini fold to resemble tRNA(Ala) and it encodes a 'tag peptide', a short internal open reading frame. During trans-translation Ala-aminoacylated tmRNA acts like a tRNA, entering the A-site of stalled ribosomes, displacing the stalled mRNA. The ribosome then switches to translate the ORF on the tmRNA; the nascent peptide is terminated with the 'tag peptide' encoded by the tmRNA and targeted for degradation. The ribosome is freed to recommence translation, which seems to be the essential function of trans-translation. The sequence is that of SsrA-binding protein from Histophilus somni (strain 129Pt) (Haemophilus somnus).